The chain runs to 889 residues: MPTAKRTSSRASLALPFQLRLVHKKSWGHRLRDFISGFLKSCRPIAKYVFPNFIVVHYIYLITLSIIGSILLYPCKNTAFIDVLFLAAGASTQGGLATKSTNDFNLYQQIVVYVITLLSTPILIHGFLAFVRLYWFERYFDNIRDISKQNFKLRRTMTLQQRELSGSSGNAARSRSFKDNLFRGKFVSREDPRQSASDVPMDSPDTSALSSISPLNVSSSKEESSDTQSSPPNFSSKRQPSDVDPRDIYKSIMMLQKQQEKSNANSTDSFSSETNGPAFIVQERHERRAPHCSLKRHSVLPSSQELNKLAQTKSFQKLLGLRRDEGDHDYFDGAPHKYMVTKKKKISRTQSCNIPTYTASPSPKTSGQVVENHRNLAKSAPSSFVDEEMSFSPQESLNLQFQAHPPKPKRREGDIGHPFTRTMSTNYLSWQPTFGRNSVFIGLTKQQKEELGGVEYRALRLLCCILMVYYIGFNILAFVTIVPWACTRHHYSEIIRRNGVSPTWWGFFTAMSAFSNLGLSLTADSMVSFDTAPYPLIFMMFFIIIGNTGFPIMLRFIIWIMFKTSRDLSQFKESLGFLLDHPRRCFTLLFPSGPTWWLFTTLVVLNATDWILFIILDFNSAVVRQVAKGYRALMGLFQSVCTRTAGFNVVDLSKLHPSIQVSYMLMMYVSVLPLAISIRRTNVYEEQSLGLYDSGQDDENITHEDDIKETDHDGESEERDTVSTKSKPKKQSPKSFVGAHLRRQLSFDLWYLFLGLFIICICEGRKIEDVNKPDFNVFAILFEVVSAYGTVGLSLGYPNTNTSLSAQFTVLSKLVIIAMLIRGRNRGLPYTLDRAIMLPSDKLEQIDRLQDMKAKGKLLAKVGEDPMTTYVKKRSHKLKKIATKFWGKH.

At 1-51 (MPTAKRTSSRASLALPFQLRLVHKKSWGHRLRDFISGFLKSCRPIAKYVFP) the chain is on the cytoplasmic side. A helical membrane pass occupies residues 52–73 (NFIVVHYIYLITLSIIGSILLY). The Extracellular segment spans residues 74-80 (PCKNTAF). The chain crosses the membrane as a helical span at residues 81 to 101 (IDVLFLAAGASTQGGLATKST). At 102–109 (NDFNLYQQ) the chain is on the cytoplasmic side. A helical transmembrane segment spans residues 110 to 130 (IVVYVITLLSTPILIHGFLAF). Over 131–464 (VRLYWFERYF…EYRALRLLCC (334 aa)) the chain is Extracellular. Residues 189-244 (REDPRQSASDVPMDSPDTSALSSISPLNVSSSKEESSDTQSSPPNFSSKRQPSDVD) are disordered. The span at 207-219 (SALSSISPLNVSS) shows a compositional bias: low complexity. Residues asparagine 216, asparagine 233, and asparagine 265 are each glycosylated (N-linked (GlcNAc...) asparagine). The helical transmembrane segment at 465 to 487 (ILMVYYIGFNILAFVTIVPWACT) threads the bilayer. The Cytoplasmic portion of the chain corresponds to 488 to 499 (RHHYSEIIRRNG). Residues 500–521 (VSPTWWGFFTAMSAFSNLGLSL) form a helical membrane-spanning segment. Residues 522–524 (TAD) are Extracellular-facing. Residues 525–545 (SMVSFDTAPYPLIFMMFFIII) form a helical membrane-spanning segment. The Cytoplasmic segment spans residues 546 to 548 (GNT). A helical membrane pass occupies residues 549–569 (GFPIMLRFIIWIMFKTSRDLS). Over 570–584 (QFKESLGFLLDHPRR) the chain is Extracellular. A helical transmembrane segment spans residues 585 to 605 (CFTLLFPSGPTWWLFTTLVVL). Residues 606–609 (NATD) are Cytoplasmic-facing. A helical membrane pass occupies residues 610–630 (WILFIILDFNSAVVRQVAKGY). Topologically, residues 631–657 (RALMGLFQSVCTRTAGFNVVDLSKLHP) are extracellular. Residues 658–678 (SIQVSYMLMMYVSVLPLAISI) form a helical membrane-spanning segment. Topologically, residues 679 to 743 (RRTNVYEEQS…KSFVGAHLRR (65 aa)) are cytoplasmic. A disordered region spans residues 705–733 (DDIKETDHDGESEERDTVSTKSKPKKQSP). Residues 744 to 764 (QLSFDLWYLFLGLFIICICEG) form a helical membrane-spanning segment. The Extracellular segment spans residues 765–776 (RKIEDVNKPDFN). A helical membrane pass occupies residues 777–797 (VFAILFEVVSAYGTVGLSLGY). Over 798–889 (PNTNTSLSAQ…KIATKFWGKH (92 aa)) the chain is Cytoplasmic.

This sequence belongs to the TrkH potassium transport family.

It is found in the membrane. This protein is required for low-affinity potassium transport. The protein is Low-affinity potassium transport protein (TRK2) of Saccharomyces cerevisiae (strain ATCC 204508 / S288c) (Baker's yeast).